A 373-amino-acid chain; its full sequence is Flagellar P-ring protein (373 aa).

Residues 1 to 26 form the signal peptide; the sequence is MRLLFRFLTLVAVLAMSLADVAPAWA.

Belongs to the FlgI family. The basal body constitutes a major portion of the flagellar organelle and consists of four rings (L,P,S, and M) mounted on a central rod.

The protein resides in the periplasm. It localises to the bacterial flagellum basal body. In terms of biological role, assembles around the rod to form the L-ring and probably protects the motor/basal body from shearing forces during rotation. The polypeptide is Flagellar P-ring protein (Rhizobium etli (strain CIAT 652)).